The chain runs to 465 residues: Cruciferin CRU4 (465 aa).

An N-terminal signal peptide occupies residues 1 to 22 (MGPTSLLSFFFTFLTLFHGFTA). 2 disulfide bridges follow: cysteine 29–cysteine 62 and cysteine 105–cysteine 283. Cupin type-1 domains lie at 34–236 (LNAL…ETAQ) and 289–438 (ENLD…QEAR). A Phosphothreonine modification is found at threonine 108. Residues 112 to 135 (SPVFGQGQGQEQGQGQGQGQGQGF) are disordered. The span at 117-133 (QGQGQEQGQGQGQGQGQ) shows a compositional bias: gly residues. Phosphotyrosine is present on tyrosine 306. Phosphoserine is present on residues serine 308 and serine 443.

This sequence belongs to the 11S seed storage protein (globulins) family. As to quaternary structure, heterohexamer; each subunit is composed of an acidic and a basic chain derived from a single precursor and linked by a disulfide bond.

Its subcellular location is the rough endoplasmic reticulum. Its function is as follows. This is a seed storage protein. The chain is Cruciferin CRU4 (CRU4) from Brassica napus (Rape).